A 1845-amino-acid chain; its full sequence is Helicase swr-1 (1845 aa).

Polar residues predominate over residues 1-13 (MTTMMTDSGTASD). The segment at 1 to 329 (MTTMMTDSGT…GASRATPRIK (329 aa)) is disordered. Over residues 24 to 38 (NDTTTTTTTTTTPGD) the composition is skewed to low complexity. A compositionally biased stretch (polar residues) spans 63-84 (SKSYSSTHHVPAIDNTSTTNAN). A compositionally biased stretch (low complexity) spans 98-108 (SPLSSISSPLS). Positions 168-180 (PKPESPPWKKFEA) are enriched in basic and acidic residues. Over residues 216–243 (AIQTSPVSNKSSASTSRKPAPASSSNSK) the composition is skewed to polar residues. Composition is skewed to pro residues over residues 248–258 (KMPPPPPPPKA) and 283–292 (PRRPATPPKP). Residues 418 to 493 (PEAEEEPPRQ…EMEASKAKWR (76 aa)) enclose the HSA domain. Disordered stretches follow at residues 539 to 713 (QKLQ…LFFG) and 749 to 935 (ELQV…TVKT). The segment covering 549-565 (DGDEITDEDEDEDDEDL) has biased composition (acidic residues). Over residues 574 to 585 (GDEKESDEHSDQ) the composition is skewed to basic and acidic residues. Composition is skewed to acidic residues over residues 586–608 (GSDE…SSED) and 663–704 (NDDD…DDEP). 2 stretches are compositionally biased toward polar residues: residues 762 to 777 (TNGT…SQTE) and 815 to 834 (TNDS…NQTL). Residues 888-897 (SQSQTQSPKT) are compositionally biased toward low complexity. Residues 898 to 909 (TDTKPTDVDTPH) show a composition bias toward basic and acidic residues. Polar residues predominate over residues 922-933 (RQSSPQPTTPTV). Residues 957–1122 (AGLYANNTNG…WSLLYFLAPP (166 aa)) enclose the Helicase ATP-binding domain. Residue 970-977 (DEMGLGKT) participates in ATP binding. Residues 1073-1076 (DEAH) carry the DEAH box motif. In terms of domain architecture, Helicase C-terminal spans 1510 to 1660 (ALDKLLRKLQ…DVVIQEGEFT (151 aa)). Disordered stretches follow at residues 1702–1724 (TTGA…PPVR), 1751–1783 (QDEA…GGEE), and 1816–1845 (LEGT…SRKR). The segment covering 1704-1718 (GAGGYDGTADGGGGA) has biased composition (gly residues). Low complexity predominate over residues 1769 to 1781 (DGLADLDGQLLGG). Positions 1826 to 1845 (DRKKGRDRNRNRKGKDSRKR) are enriched in basic residues.

This sequence belongs to the SNF2/RAD54 helicase family. SWR1 subfamily. Component of the SWR1 chromatin-remodeling complex.

The protein localises to the nucleus. It carries out the reaction ATP + H2O = ADP + phosphate + H(+). Its function is as follows. Catalytic component of the SWR1 complex which mediates the ATP-dependent exchange of histone H2A for the H2A variant H2A.Z leading to transcriptional regulation of selected genes by chromatin remodeling. In Neurospora crassa (strain ATCC 24698 / 74-OR23-1A / CBS 708.71 / DSM 1257 / FGSC 987), this protein is Helicase swr-1 (crf1-1).